A 259-amino-acid chain; its full sequence is Ribonuclease HII (259 aa).

The interval 1–26 (MLSTPPKLPSAHGPVHFPRRSGTGMN) is disordered. In terms of domain architecture, RNase H type-2 spans 55–243 (APVAGADEAG…VRAQQLVLFE (189 aa)). A divalent metal cation contacts are provided by aspartate 61, glutamate 62, and aspartate 152.

This sequence belongs to the RNase HII family. The cofactor is Mn(2+). Requires Mg(2+) as cofactor.

It is found in the cytoplasm. It catalyses the reaction Endonucleolytic cleavage to 5'-phosphomonoester.. In terms of biological role, endonuclease that specifically degrades the RNA of RNA-DNA hybrids. The protein is Ribonuclease HII of Azorhizobium caulinodans (strain ATCC 43989 / DSM 5975 / JCM 20966 / LMG 6465 / NBRC 14845 / NCIMB 13405 / ORS 571).